The primary structure comprises 289 residues: MWRSCLRLRDGGRRLLNRPAGGPSASMSPGPTIPSPARAYAPPTERKRFYQNVSITQGEGGFEINLDHRKLKTPQAKLFTVPSEALAIAVATEWDSQQDTIKYYTMHLTTLCNTSLDNPTQRNKDQLIRAAVKFLDTDTICYRVEEPETLVELQRNEWDPIIEWAEKRYGVEISSSTSIMGPSIPAKTREVLVSHLASYNTWALQGIEFVAAQLKSMVLTLGLIDLRLTVEQAVLLSRLEEEYQIQKWGNIEWAHDYELQELRARTAAGTLFIHLCSESTTVKHKLLKE.

A mitochondrion-targeting transit peptide spans 1–40; sequence MWRSCLRLRDGGRRLLNRPAGGPSASMSPGPTIPSPARAY. Residues 13–40 form a disordered region; that stretch reads RRLLNRPAGGPSASMSPGPTIPSPARAY. An N6-succinyllysine modification is found at K133.

Belongs to the ATP12 family. In terms of assembly, interacts with ATP5F1B; involved in the assembly of the F1 component of the mitochondrial ATP synthase (ATPase). Interacts with FMC1. In terms of tissue distribution, widely expressed.

It localises to the mitochondrion inner membrane. In terms of biological role, plays a role in the assembly of the F1 component of the mitochondrial ATP synthase (ATPase). The chain is ATP synthase mitochondrial F1 complex assembly factor 2 from Homo sapiens (Human).